We begin with the raw amino-acid sequence, 899 residues long: Calcium-transporting ATPase 1 (899 aa).

Helical transmembrane passes span 59-79 (FVKD…VTLG), 80-100 (NIDD…VGFV), 247-267 (QLSL…FFQG), and 282-302 (VAAI…LGVL). Residue D329 is the 4-aspartylphosphate intermediate of the active site. Helical transmembrane passes span 688–708 (FQLS…VFGF), 757–777 (QLLQ…IVVF), 827–847 (FNIA…ASPF), and 854–874 (EAIG…VLWV). The residue at position 892 (S892) is a Phosphoserine.

The protein belongs to the cation transport ATPase (P-type) (TC 3.A.3) family.

The protein resides in the endoplasmic reticulum membrane. It catalyses the reaction Ca(2+)(in) + ATP + H2O = Ca(2+)(out) + ADP + phosphate + H(+). In terms of biological role, transports calcium and manganese ions into the cell. Regulates cell morphogenesis through control of manganese and calcium homeostasis. The sequence is that of Calcium-transporting ATPase 1 (pmr1) from Schizosaccharomyces pombe (strain 972 / ATCC 24843) (Fission yeast).